A 974-amino-acid polypeptide reads, in one-letter code: UvrABC system protein A (974 aa).

34–41 (GLSGSGKS) serves as a coordination point for ATP. ABC transporter domains lie at 331 to 610 (WARS…TNSL) and 630 to 959 (ISKT…QFLK). 663–670 (GVSGGGKS) serves as a coordination point for ATP. A C4-type zinc finger spans residues 762–788 (CEACQGDGVIKIEMHFLPDVYVTCDVC).

This sequence belongs to the ABC transporter superfamily. UvrA family. In terms of assembly, forms a heterotetramer with UvrB during the search for lesions.

Its subcellular location is the cytoplasm. The UvrABC repair system catalyzes the recognition and processing of DNA lesions. UvrA is an ATPase and a DNA-binding protein. A damage recognition complex composed of 2 UvrA and 2 UvrB subunits scans DNA for abnormalities. When the presence of a lesion has been verified by UvrB, the UvrA molecules dissociate. This Brucella melitensis biotype 1 (strain ATCC 23456 / CCUG 17765 / NCTC 10094 / 16M) protein is UvrABC system protein A.